The primary structure comprises 526 residues: Protein spinster homolog 1 (526 aa).

A disordered region spans residues 1 to 43; it reads MTSRSSQGDAAPFLTQADNTEEEGAPDPGGHSSDEEEEEGKDH. The next 12 membrane-spanning stretches (helical) occupy residues 48 to 68, 98 to 118, 126 to 146, 159 to 179, 187 to 207, 218 to 238, 272 to 292, 321 to 341, 355 to 375, 385 to 405, 419 to 439, and 463 to 483; these read HLLT…LFYI, GLVQ…FGYL, LIMC…SFVS, LVGV…ADLF, MLSF…IAGS, WALR…IFVA, FILS…LALW, MIFG…GVEI, LVCA…LAFA, FIFI…DILL, LQIV…IGVI, and MICA…ALFI.

It belongs to the major facilitator superfamily. Spinster (TC 2.A.1.49) family.

Its subcellular location is the lysosome membrane. It catalyses the reaction a 1-acyl-sn-glycero-3-phosphocholine(out) + H(+)(out) = a 1-acyl-sn-glycero-3-phosphocholine(in) + H(+)(in). It carries out the reaction a 1-acyl-sn-glycero-3-phosphoethanolamine(out) + H(+)(out) = a 1-acyl-sn-glycero-3-phosphoethanolamine(in) + H(+)(in). The enzyme catalyses a 1-O-(1Z-alkenyl)-sn-glycero-3-phosphocholine(out) + H(+)(out) = a 1-O-(1Z-alkenyl)-sn-glycero-3-phosphocholine(in) + H(+)(in). The catalysed reaction is a 1-O-(1Z-alkenyl)-sn-glycero-3-phosphoethanolamine(out) + H(+)(out) = a 1-O-(1Z-alkenyl)-sn-glycero-3-phosphoethanolamine(in) + H(+)(in). Functionally, mediates the rate-limiting, proton-dependent, lysosomal efflux of lysophospholipids. Selective for zwitterionic headgroups such as lysophosphatidylcholine (LPC) and lysophosphatidylethanolamine (LPE). Essential player in lysosomal homeostasis. This chain is Protein spinster homolog 1 (spns1), found in Xenopus tropicalis (Western clawed frog).